A 217-amino-acid chain; its full sequence is Ribonuclease HII (217 aa).

An RNase H type-2 domain is found at 25–215 (KLIAGVDESG…VKHVISDINR (191 aa)). A divalent metal cation is bound by residues Asp31, Glu32, and Asp123.

It belongs to the RNase HII family. Requires Mn(2+) as cofactor. It depends on Mg(2+) as a cofactor.

The protein resides in the cytoplasm. It carries out the reaction Endonucleolytic cleavage to 5'-phosphomonoester.. In terms of biological role, endonuclease that specifically degrades the RNA of RNA-DNA hybrids. The protein is Ribonuclease HII of Blochmanniella pennsylvanica (strain BPEN).